The chain runs to 202 residues: Adenylyl-sulfate kinase (202 aa).

Gly-35 to Ser-42 serves as a coordination point for ATP. The active-site Phosphoserine intermediate is Ser-109.

Belongs to the APS kinase family.

It carries out the reaction adenosine 5'-phosphosulfate + ATP = 3'-phosphoadenylyl sulfate + ADP + H(+). It participates in sulfur metabolism; hydrogen sulfide biosynthesis; sulfite from sulfate: step 2/3. Its function is as follows. Catalyzes the synthesis of activated sulfate. The protein is Adenylyl-sulfate kinase of Bacteroides fragilis (strain ATCC 25285 / DSM 2151 / CCUG 4856 / JCM 11019 / LMG 10263 / NCTC 9343 / Onslow / VPI 2553 / EN-2).